Here is a 254-residue protein sequence, read N- to C-terminus: Flavin-dependent thymidylate synthase (254 aa).

In terms of domain architecture, ThyX spans 7-237; the sequence is LRVQLIAKTE…PAVFADFEIT (231 aa). Residues 92–95, 103–107, and His176 contribute to the dUMP site; these read ELIR and QLSQR. FAD contacts are provided by residues 95–97 and Gln103; that span reads RHR. The ThyX motif signature appears at 95-105; that stretch reads RHRHFSYSQLS. FAD is bound by residues 192–194 and His198; that span reads NYR. Residue Arg203 participates in dUMP binding. The Involved in ionization of N3 of dUMP, leading to its activation role is filled by Arg203.

This sequence belongs to the thymidylate synthase ThyX family. Homotetramer. Requires FAD as cofactor.

It catalyses the reaction dUMP + (6R)-5,10-methylene-5,6,7,8-tetrahydrofolate + NADPH + H(+) = dTMP + (6S)-5,6,7,8-tetrahydrofolate + NADP(+). The protein operates within pyrimidine metabolism; dTTP biosynthesis. Its function is as follows. Catalyzes the reductive methylation of 2'-deoxyuridine-5'-monophosphate (dUMP) to 2'-deoxythymidine-5'-monophosphate (dTMP) while utilizing 5,10-methylenetetrahydrofolate (mTHF) as the methyl donor, and NADPH and FADH(2) as the reductant. The sequence is that of Flavin-dependent thymidylate synthase from Mycobacterium leprae (strain Br4923).